The following is a 348-amino-acid chain: MVRTINETFLKACRGERTDYVPAWYMRQAGRSQPEYRKIKEKYSLFEITHNPELCAYVTKLPVDQYNVDAAILYKDIMSPLPAIGVDVEIKSGIGPVIDNPIRSLQDVEKLGEINPEDDVPYILDTIRLLTTEMLDVPLIGFSGAPFTLASYMIEGGPSRNYHNTKAFMYAEPKAWFALMDKLADMVITYLKAQINAGAKAVQIFDSWVGTVNVADYRVFIKPAMERIFAEVRPMGVPMIMHGVGAAHLVNEWHDLPLDVVGLDWRLPIEEARARGVHKAVQGNMDPSFLLAPWSVIEEHVKGILDQGMKEPGYIFNLGHGVFPEVNPDTLKRLTTFIHEYSKGQLAK.

Residues 27 to 31 (RQAGR), F46, D76, Y152, S207, and H320 contribute to the substrate site.

The protein belongs to the uroporphyrinogen decarboxylase family. In terms of assembly, homodimer.

It localises to the cytoplasm. The enzyme catalyses uroporphyrinogen III + 4 H(+) = coproporphyrinogen III + 4 CO2. It functions in the pathway porphyrin-containing compound metabolism; protoporphyrin-IX biosynthesis; coproporphyrinogen-III from 5-aminolevulinate: step 4/4. Its function is as follows. Catalyzes the decarboxylation of four acetate groups of uroporphyrinogen-III to yield coproporphyrinogen-III. The chain is Uroporphyrinogen decarboxylase from Bacillus cereus (strain G9842).